The chain runs to 330 residues: Probable xanthine dehydrogenase subunit A (330 aa).

In terms of assembly, could be composed of four subunits: PucA, PucC, PucD and PucE.

The enzyme catalyses xanthine + NAD(+) + H2O = urate + NADH + H(+). It catalyses the reaction hypoxanthine + NAD(+) + H2O = xanthine + NADH + H(+). It participates in purine metabolism; hypoxanthine degradation; urate from hypoxanthine: step 1/2. It functions in the pathway purine metabolism; hypoxanthine degradation; urate from hypoxanthine: step 2/2. Functionally, oxidizes hypoxanthine and xanthine to uric acid. PucA subunit could exert a molybdenum cofactor recruiting function. This is Probable xanthine dehydrogenase subunit A (pucA) from Bacillus subtilis (strain 168).